A 470-amino-acid polypeptide reads, in one-letter code: uncharacterized protein (470 aa).

A disordered region spans residues 439-470; the sequence is SIKSSKSKKQLKSSKSKKPIKHTKTKNIYVET. A compositionally biased stretch (basic residues) spans 443–463; it reads SKSKKQLKSSKSKKPIKHTKT.

This is an uncharacterized protein from Acanthamoeba polyphaga mimivirus (APMV).